The sequence spans 301 residues: Fluoroquinolones export ATP-binding protein Rv2688c (301 aa).

Positions 18 to 246 (IRVRGLTFRY…RSRRRVRVEY (229 aa)) constitute an ABC transporter domain. 52-59 (GPSGAGKS) lines the ATP pocket.

Belongs to the ABC transporter superfamily. The complex is composed of 2 ATP-binding proteins (Rv2688c) and 2 transmembrane proteins (Rv2686c and Rv2687c).

The protein localises to the cell membrane. With respect to regulation, inhibited by reserpine and verapamil. Part of the ABC transporter complex Rv2686c/Rv2687c/Rv2688c involved in fluoroquinolones export. Confers resistance to ciprofloxacin and, to a lesser extent, norfloxacin, moxifloxacin and sparfloxacin. Probably responsible for energy coupling to the transport system. The protein is Fluoroquinolones export ATP-binding protein Rv2688c of Mycobacterium tuberculosis (strain ATCC 25618 / H37Rv).